Consider the following 240-residue polypeptide: C-type lectin domain family 4 member A (240 aa).

The Cytoplasmic portion of the chain corresponds to 1–48 (MASEITYAEVRIKNESNSSVTYSGSPAAPREKPTRHLSKPGSLLVPFT). Positions 5-10 (ITYAEV) match the ITIM motif motif. Positions 18-38 (SSVTYSGSPAAPREKPTRHLS) are disordered. The helical; Signal-anchor for type II membrane protein transmembrane segment at 49–69 (SLMVLLLLLAITFLVAFIIYF) threads the bilayer. Over 70–240 (QKYSQFLEEK…SVCQMKKIQL (171 aa)) the chain is Extracellular. Intrachain disulfides connect Cys107–Cys118, Cys140–Cys233, and Cys208–Cys225. Residues 129–235 (SKASWSESEK…SGKQQSVCQM (107 aa)) enclose the C-type lectin domain. Ca(2+) contacts are provided by Val149 and Glu155. Asn190 carries N-linked (GlcNAc...) asparagine glycosylation. Ca(2+) contacts are provided by Glu200, Ser202, and Glu206. Residues 200 to 202 (EPS) and Glu206 contribute to the alpha-D-mannopyranose site. Position 211 to 213 (211 to 213 (INH)) interacts with N-acetyl-D-glucosamine. The Ca(2+) site is built by Asn221 and Asp222.

In terms of assembly, may interact with PTPN6 via its ITIM site. As to expression, expressed by myeloid cells (dendritic cells, macrophages, and neutrophils) and B-cells.

The protein localises to the cell membrane. C-type lectin receptor that binds carbohydrates mannose and fucose but also weakly interacts with N-acetylglucosamine (GlcNAc) in a Ca(2+)-dependent manner. Involved in regulating immune reactivity. Once triggered by antigen, it is internalized by clathrin-dependent endocytosis and delivers its antigenic cargo into the antigen presentation pathway resulting in cross-priming of CD8(+) T cells. This cross-presentation and cross-priming are enhanced by TLR7 and TLR8 agonists with increased expansion of the CD8(+) T cells, high production of IFNG and TNF with reduced levels of IL4, IL5 and IL13. In plasmacytoid dendritic cells, inhibits TLR9-mediated IFNA and TNF production. May be involved via its ITIM motif (immunoreceptor tyrosine-based inhibitory motifs) in the inhibition of B-cell-receptor-mediated calcium mobilization and protein tyrosine phosphorylation. The polypeptide is C-type lectin domain family 4 member A (Clec4a) (Rattus norvegicus (Rat)).